The chain runs to 604 residues: Serine/threonine-protein kinase A-Raf (604 aa).

Residues 19–91 (GTVKVYLPNK…DGEELIVEVL (73 aa)) enclose the RBD domain. Residues 98–144 (MHNFVRKTFFSLAFCDFCLKFLFHGFRCQTCGYKFHQHCSSKVPTVC) form a Phorbol-ester/DAG-type zinc finger. Zn(2+)-binding residues include His99, Cys112, Cys115, Cys125, Cys128, His133, Cys136, and Cys144. Ser157 and Ser162 each carry phosphoserine. Disordered regions lie at residues 177–222 (NELL…HMVS) and 241–288 (TDAA…EKKK). Residue Thr181 is modified to Phosphothreonine. Phosphoserine is present on Ser186. Residues 210–222 (IRSTSTPNVHMVS) are compositionally biased toward polar residues. The span at 252-265 (PRGSPSPASVSSGR) shows a compositional bias: low complexity. 2 positions are modified to phosphoserine: Ser255 and Ser267. The segment covering 272-287 (LPSEQRERKSLADEKK) has biased composition (basic and acidic residues). A Protein kinase domain is found at 308 to 568 (VQLLKRIGTG…PQILATIELL (261 aa)). Residues 314-322 (IGTGSFGTV) and Lys334 each bind ATP. Thr316 carries the post-translational modification Phosphothreonine. The active-site Proton acceptor is the Asp427.

The protein belongs to the protein kinase superfamily. TKL Ser/Thr protein kinase family. RAF subfamily. Interacts with TH1L/NELFD. Zn(2+) is required as a cofactor. Post-translationally, dephosphorylation by the SHOC2-MRAS-PP1c (SMP) complex consisting of SHOC2, GTP-bound M-Ras/MRAS and the catalytic subunit of protein phosphatase 1 (PPP1CA, PPP1CB or PPP1CC); this relieves inactivation and stimulates kinase activity.

It catalyses the reaction L-seryl-[protein] + ATP = O-phospho-L-seryl-[protein] + ADP + H(+). It carries out the reaction L-threonyl-[protein] + ATP = O-phospho-L-threonyl-[protein] + ADP + H(+). Functionally, involved in the transduction of mitogenic signals from the cell membrane to the nucleus. May also regulate the TOR signaling cascade. Phosphorylates PFKFB2. The sequence is that of Serine/threonine-protein kinase A-Raf (Araf) from Mus musculus (Mouse).